We begin with the raw amino-acid sequence, 563 residues long: Probable trehalase (563 aa).

Substrate contacts are provided by residues arginine 154, 161 to 162, asparagine 198, 207 to 209, 274 to 276, and glycine 307; these read WD, RSQ, and RPE. Catalysis depends on proton donor/acceptor residues aspartate 309 and glutamate 517. Position 532 (glutamate 532) interacts with substrate.

Belongs to the glycosyl hydrolase 37 family.

The catalysed reaction is alpha,alpha-trehalose + H2O = alpha-D-glucose + beta-D-glucose. Its function is as follows. Involved in the regulation of trehalose content by hydrolyzing trehalose to glucose. This chain is Probable trehalase, found in Oryza sativa subsp. japonica (Rice).